Reading from the N-terminus, the 126-residue chain is Small ribosomal subunit protein uS13 (126 aa).

The tract at residues 94–126 is disordered; that stretch reads RGLPVHGQRTSTNARTRKGPRRAIAGKKKPGKK. Residues 108-126 show a composition bias toward basic residues; the sequence is RTRKGPRRAIAGKKKPGKK.

Belongs to the universal ribosomal protein uS13 family. As to quaternary structure, part of the 30S ribosomal subunit. Forms a loose heterodimer with protein S19. Forms two bridges to the 50S subunit in the 70S ribosome.

Functionally, located at the top of the head of the 30S subunit, it contacts several helices of the 16S rRNA. In the 70S ribosome it contacts the 23S rRNA (bridge B1a) and protein L5 of the 50S subunit (bridge B1b), connecting the 2 subunits; these bridges are implicated in subunit movement. Contacts the tRNAs in the A and P-sites. This Streptomyces griseus subsp. griseus (strain JCM 4626 / CBS 651.72 / NBRC 13350 / KCC S-0626 / ISP 5235) protein is Small ribosomal subunit protein uS13.